Reading from the N-terminus, the 277-residue chain is Probable xyloglucan endotransglucosylase/hydrolase protein 11 (277 aa).

An N-terminal signal peptide occupies residues 1-24; the sequence is MRGSDQKILLMVMVVVAVVAAAQG. The region spanning 32 to 209 is the GH16 domain; that stretch reads VTWGNNYYQT…PKQMPYIAKF (178 aa). N-linked (GlcNAc...) asparagine glycosylation is present at Asn50. Glu107 acts as the Nucleophile in catalysis. Residues 123-125 and 133-135 each bind xyloglucan; these read NTN and GKD. A glycan (N-linked (GlcNAc...) asparagine) is linked at Asn194. 2 disulfide bridges follow: Cys217-Cys227 and Cys260-Cys273. Arg265 contacts xyloglucan.

It belongs to the glycosyl hydrolase 16 family. XTH group 1 subfamily. Contains at least one intrachain disulfide bond essential for its enzymatic activity.

The protein resides in the secreted. Its subcellular location is the cell wall. It localises to the extracellular space. The protein localises to the apoplast. It catalyses the reaction breaks a beta-(1-&gt;4) bond in the backbone of a xyloglucan and transfers the xyloglucanyl segment on to O-4 of the non-reducing terminal glucose residue of an acceptor, which can be a xyloglucan or an oligosaccharide of xyloglucan.. Its function is as follows. May catalyze xyloglucan endohydrolysis (XEH) and/or endotransglycosylation (XET). Cleaves and religates xyloglucan polymers, an essential constituent of the primary cell wall, and thereby participates in cell wall construction of growing tissues. The sequence is that of Probable xyloglucan endotransglucosylase/hydrolase protein 11 (XTH11) from Arabidopsis thaliana (Mouse-ear cress).